Reading from the N-terminus, the 121-residue chain is Large ribosomal subunit protein uL14 (121 aa).

This sequence belongs to the universal ribosomal protein uL14 family. In terms of assembly, part of the 50S ribosomal subunit. Forms a cluster with proteins L3 and L19. In the 70S ribosome, L14 and L19 interact and together make contacts with the 16S rRNA in bridges B5 and B8.

In terms of biological role, binds to 23S rRNA. Forms part of two intersubunit bridges in the 70S ribosome. This Synechococcus elongatus (strain ATCC 33912 / PCC 7942 / FACHB-805) (Anacystis nidulans R2) protein is Large ribosomal subunit protein uL14.